Consider the following 428-residue polypeptide: AP2-like ethylene-responsive transcription factor At2g41710 (428 aa).

Residues 1–10 (MASVSSSDQG) are compositionally biased toward polar residues. Residues 1–28 (MASVSSSDQGPKTEAGCSGGGGGESSET) are disordered. Residues 70-136 (IYRGVTRHRW…WGPGTLINFP (67 aa)) constitute a DNA-binding region (AP2/ERF).

This sequence belongs to the AP2/ERF transcription factor family. AP2 subfamily.

The protein localises to the nucleus. Probably acts as a transcriptional activator. Binds to the GCC-box pathogenesis-related promoter element. May be involved in the regulation of gene expression by stress factors and by components of stress signal transduction pathways. This Arabidopsis thaliana (Mouse-ear cress) protein is AP2-like ethylene-responsive transcription factor At2g41710.